We begin with the raw amino-acid sequence, 460 residues long: Bifunctional protein GlmU (460 aa).

The segment at 1–229 (MTNYAIILAA…FNESLGVNDR (229 aa)) is pyrophosphorylase. UDP-N-acetyl-alpha-D-glucosamine is bound by residues 8–11 (LAAG), lysine 22, glutamine 72, and 77–78 (GT). Aspartate 102 serves as a coordination point for Mg(2+). UDP-N-acetyl-alpha-D-glucosamine contacts are provided by glycine 139, glutamate 154, asparagine 169, and asparagine 227. Asparagine 227 provides a ligand contact to Mg(2+). The linker stretch occupies residues 230–250 (VALATAETVMRQRITQKHMVN). The N-acetyltransferase stretch occupies residues 251 to 460 (GVTFHNPETV…RLAHHPSRSK (210 aa)). UDP-N-acetyl-alpha-D-glucosamine-binding residues include arginine 332 and lysine 350. The active-site Proton acceptor is histidine 362. 2 residues coordinate UDP-N-acetyl-alpha-D-glucosamine: tyrosine 365 and asparagine 376. Acetyl-CoA-binding positions include alanine 379, 385 to 386 (NY), serine 404, alanine 422, and arginine 439.

It in the N-terminal section; belongs to the N-acetylglucosamine-1-phosphate uridyltransferase family. The protein in the C-terminal section; belongs to the transferase hexapeptide repeat family. Homotrimer. Mg(2+) is required as a cofactor.

It is found in the cytoplasm. It catalyses the reaction alpha-D-glucosamine 1-phosphate + acetyl-CoA = N-acetyl-alpha-D-glucosamine 1-phosphate + CoA + H(+). The catalysed reaction is N-acetyl-alpha-D-glucosamine 1-phosphate + UTP + H(+) = UDP-N-acetyl-alpha-D-glucosamine + diphosphate. The protein operates within nucleotide-sugar biosynthesis; UDP-N-acetyl-alpha-D-glucosamine biosynthesis; N-acetyl-alpha-D-glucosamine 1-phosphate from alpha-D-glucosamine 6-phosphate (route II): step 2/2. It functions in the pathway nucleotide-sugar biosynthesis; UDP-N-acetyl-alpha-D-glucosamine biosynthesis; UDP-N-acetyl-alpha-D-glucosamine from N-acetyl-alpha-D-glucosamine 1-phosphate: step 1/1. It participates in bacterial outer membrane biogenesis; LPS lipid A biosynthesis. Functionally, catalyzes the last two sequential reactions in the de novo biosynthetic pathway for UDP-N-acetylglucosamine (UDP-GlcNAc). The C-terminal domain catalyzes the transfer of acetyl group from acetyl coenzyme A to glucosamine-1-phosphate (GlcN-1-P) to produce N-acetylglucosamine-1-phosphate (GlcNAc-1-P), which is converted into UDP-GlcNAc by the transfer of uridine 5-monophosphate (from uridine 5-triphosphate), a reaction catalyzed by the N-terminal domain. This is Bifunctional protein GlmU from Streptococcus pyogenes serotype M3 (strain ATCC BAA-595 / MGAS315).